Here is a 552-residue protein sequence, read N- to C-terminus: ATP synthase subunit alpha, mitochondrial (552 aa).

The transit peptide at 1–47 directs the protein to the mitochondrion; that stretch reads MSIFSARLASSVARNLPKAANQVACKAAYPAASLAARKLHVASTQRS. ATP is bound at residue 211–218; that stretch reads GDRQTGKT.

It belongs to the ATPase alpha/beta chains family. As to quaternary structure, F-type ATPases have 2 components, CF(1) - the catalytic core - and CF(0) - the membrane proton channel. CF(1) has five subunits: alpha(3), beta(3), gamma(1), delta(1), epsilon(1). CF(0) has three main subunits: a, b and c.

The protein localises to the mitochondrion inner membrane. Mitochondrial membrane ATP synthase (F(1)F(0) ATP synthase or Complex V) produces ATP from ADP in the presence of a proton gradient across the membrane which is generated by electron transport complexes of the respiratory chain. F-type ATPases consist of two structural domains, F(1) - containing the extramembraneous catalytic core, and F(0) - containing the membrane proton channel, linked together by a central stalk and a peripheral stalk. During catalysis, ATP synthesis in the catalytic domain of F(1) is coupled via a rotary mechanism of the central stalk subunits to proton translocation. Subunits alpha and beta form the catalytic core in F(1). Rotation of the central stalk against the surrounding alpha(3)beta(3) subunits leads to hydrolysis of ATP in three separate catalytic sites on the beta subunits. Subunit alpha does not bear the catalytic high-affinity ATP-binding sites. The protein is ATP synthase subunit alpha, mitochondrial (blw) of Drosophila melanogaster (Fruit fly).